A 132-amino-acid polypeptide reads, in one-letter code: uncharacterized protein (132 aa).

This is an uncharacterized protein from Homo sapiens (Human).